The chain runs to 631 residues: MSTTTLTRREQRAKAQHFIDTLEGTAFPNSKRIYVTGSQHDIRVPMREIQLSPTLIGGSKDNPQFEENEAVPVYDTSGPYGDPEVAINVQQGLAKLRQPWIEARADVETLADRSSAYTRERLTDEGLDALRFTGLLTPKRAKAGHRVTQLHYARQGIVTPEMEFIAIRENMGRERIRSEVLRHQHPGMSFGARLPENITPEFVRDEVAAGRAIIPANINHPESEPMIIGRNFLVKVNANIGNSAVTSSIEEEVEKLVWSTRWGADTVMDLSTGRYIHETREWILRNSPVPIGTVPIYQALEKVNGIAEDLTWEAFRDTLLEQAEQGVDYFTIHAGVLLRYVPMTAKRLTGIVSRGGSIMAKWCLSHHKENFLFEHFREICEICAAYDVSLSLGDGLRPGSIQDANDEAQFSELHTLGELTKIAWEYDVQVMIEGPGHVPMHMIQRNMTEELESCHEAPFYTLGPLTTDIAPGYDHFTSGIGAAMIGWFGCAMLCYVTPKEHLGLPNKEDVKQGLITYKIAAHAADLAKGHPGAQIRDNAMSKARFEFRWEDQFNLALDPFTARAYHDETLPQESGKVAHFCSMCGPKFCSMKISQEVRDYAAAQTIEVGMANMSENFRAKGGEIYLKREEV.

Residues N239, M268, Y297, H333, 353 to 355, 394 to 397, and E433 each bind substrate; these read SRG and DGLR. H437 is a Zn(2+) binding site. Y460 is a binding site for substrate. Residue H501 participates in Zn(2+) binding. Positions 581, 584, and 589 each coordinate [4Fe-4S] cluster.

It belongs to the ThiC family. In terms of assembly, homodimer. Requires [4Fe-4S] cluster as cofactor.

It catalyses the reaction 5-amino-1-(5-phospho-beta-D-ribosyl)imidazole + S-adenosyl-L-methionine = 4-amino-2-methyl-5-(phosphooxymethyl)pyrimidine + CO + 5'-deoxyadenosine + formate + L-methionine + 3 H(+). It participates in cofactor biosynthesis; thiamine diphosphate biosynthesis. Its function is as follows. Catalyzes the synthesis of the hydroxymethylpyrimidine phosphate (HMP-P) moiety of thiamine from aminoimidazole ribotide (AIR) in a radical S-adenosyl-L-methionine (SAM)-dependent reaction. In Salmonella agona (strain SL483), this protein is Phosphomethylpyrimidine synthase.